The chain runs to 511 residues: 2,3-bisphosphoglycerate-independent phosphoglycerate mutase (511 aa).

Mn(2+) is bound by residues Asp-14 and Ser-64. The active-site Phosphoserine intermediate is Ser-64. Substrate contacts are provided by residues His-125, 155 to 156 (RD), Arg-187, Arg-193, 259 to 262 (RADR), and Lys-333. Residues Asp-400, His-404, Asp-441, His-442, and His-460 each contribute to the Mn(2+) site.

Belongs to the BPG-independent phosphoglycerate mutase family. In terms of assembly, monomer. It depends on Mn(2+) as a cofactor.

It carries out the reaction (2R)-2-phosphoglycerate = (2R)-3-phosphoglycerate. The protein operates within carbohydrate degradation; glycolysis; pyruvate from D-glyceraldehyde 3-phosphate: step 3/5. Catalyzes the interconversion of 2-phosphoglycerate and 3-phosphoglycerate. The polypeptide is 2,3-bisphosphoglycerate-independent phosphoglycerate mutase (Idiomarina loihiensis (strain ATCC BAA-735 / DSM 15497 / L2-TR)).